The primary structure comprises 1275 residues: Rho1 guanine nucleotide exchange factor 3 (1275 aa).

4 disordered regions span residues 1-42, 56-113, 131-188, and 214-248; these read MKLS…SFQK, SPPF…NSAA, NNPL…SPYS, and LSPT…VEYL. Over residues 7-17 the composition is skewed to basic and acidic residues; that stretch reads LFHRSSKDHGG. 3 stretches are compositionally biased toward polar residues: residues 32 to 42, 80 to 113, and 142 to 151; these read PHSSSPPSFQK, ASIN…NSAA, and SPGNKQNTVD. Low complexity-rich tracts occupy residues 178–188 and 214–228; these read SSVSSHSSPYS and LSPT…SPIR. Ser293 carries the post-translational modification Phosphoserine. The DH domain occupies 465-657; that stretch reads ARQNNIHELI…RATCEECDAV (193 aa). Residues 692–855 form the PH domain; that stretch reads EFFFEGIVQR…WVEKINVAKK (164 aa). Residues 930–1239 enclose the CNH domain; sequence YGDISCIAQF…KYYPSNSDWL (310 aa).

The protein resides in the cytoplasm. Functionally, stimulates the exchange of Rho1 GDP-bound form into GTP-bound form. Regulates, via interaction and activation of Rho1, beta-1,3-glucan biosynthesis and cell wall integrity during septation. Involved in the regulation of contractile ring assembly. This chain is Rho1 guanine nucleotide exchange factor 3 (rgf3), found in Schizosaccharomyces pombe (strain 972 / ATCC 24843) (Fission yeast).